We begin with the raw amino-acid sequence, 94 residues long: VCCRGLLGAASVGRQNRFEIVYNLLSLREVWDMFGVFFFNHPDLRILTDYGFEGHPFRKYDDEVKRVVAEPVELAQEFRKFDLNSPWEAFPAYR.

This sequence belongs to the complex I 30 kDa subunit family. As to quaternary structure, core subunit of respiratory chain NADH dehydrogenase (Complex I) which is composed of 45 different subunits. Interacts with NDUFAF3. Interacts with RAB5IF. Found in subcomplexes containing subunits NDUFS2, MT-ND1 and NDUFA13.

The protein resides in the mitochondrion inner membrane. The enzyme catalyses a ubiquinone + NADH + 5 H(+)(in) = a ubiquinol + NAD(+) + 4 H(+)(out). Core subunit of the mitochondrial membrane respiratory chain NADH dehydrogenase (Complex I) which catalyzes electron transfer from NADH through the respiratory chain, using ubiquinone as an electron acceptor. Essential for the catalytic activity and assembly of complex I. This Mesocricetus auratus (Golden hamster) protein is NADH dehydrogenase [ubiquinone] iron-sulfur protein 3, mitochondrial.